Consider the following 369-residue polypeptide: Protein arginine N-methyltransferase 1-A (369 aa).

One can recognise an SAM-dependent MTase PRMT-type domain in the interval 48-369; that stretch reads KDYYFDSYAH…LSCSTDYRMR (322 aa). S-adenosyl-L-methionine is bound by residues histidine 61, arginine 70, glycine 94, glutamate 116, and glutamate 145. Catalysis depends on residues glutamate 160 and glutamate 169.

The protein belongs to the class I-like SAM-binding methyltransferase superfamily. Protein arginine N-methyltransferase family. As to quaternary structure, homodimer. Homooctamer; individual homodimers associates to form a homooctamer and homooligomerization is required for proper localization to the cell membrane. Individual homodimers can associate to form a homohexamer. Component of a complex with lsm14a/rap55a. Interacts with cirbp.

The protein localises to the nucleus. The protein resides in the nucleoplasm. Its subcellular location is the cytoplasm. It is found in the cytosol. It catalyses the reaction L-arginyl-[protein] + 2 S-adenosyl-L-methionine = N(omega),N(omega)-dimethyl-L-arginyl-[protein] + 2 S-adenosyl-L-homocysteine + 2 H(+). It carries out the reaction L-arginyl-[protein] + S-adenosyl-L-methionine = N(omega)-methyl-L-arginyl-[protein] + S-adenosyl-L-homocysteine + H(+). The enzyme catalyses N(omega)-methyl-L-arginyl-[protein] + S-adenosyl-L-methionine = N(omega),N(omega)-dimethyl-L-arginyl-[protein] + S-adenosyl-L-homocysteine + H(+). Functionally, arginine methyltransferase that methylates (mono and asymmetric dimethylation) the guanidino nitrogens of arginyl residues present in target proteins. Constitutes the main enzyme that mediates monomethylation and asymmetric dimethylation of histone H4 'Arg-4' (H4R3me1 and H4R3me2a, respectively), a specific tag for epigenetic transcriptional activation. Methylates cirbp to regulate its subcellular location. Acts transiently during metamorphosis as a transcription coactivator, enhancing thyroid hormone (T3) receptor (TR)-mediated transcription by enhancing TR binding to the T3 response element (TRE), and histone modification through recruitment of other coactivators. This chain is Protein arginine N-methyltransferase 1-A (prmt1-a), found in Xenopus laevis (African clawed frog).